The chain runs to 644 residues: Kininogen-1 (644 aa).

The N-terminal stretch at 1–18 is a signal peptide; it reads MKLITILFLCSRLLLSLT. Pyrrolidone carboxylic acid; in mature form is present on Q19. In terms of domain architecture, Cystatin kininogen-type 1 spans 28–132; the sequence is CNDKDLFKAV…TQTCQITPAE (105 aa). 9 disulfide bridges follow: C28-C614, C83-C94, C107-C126, C142-C145, C206-C218, C229-C248, C264-C267, C328-C340, and C351-C370. The N-linked (GlcNAc...) (complex) asparagine glycan is linked to N48. The interval 120–153 is O-glycosylated at one site only; it reads SVATQTCQITPAEGPVVTAQYDCLGCVHPISTQS. A Cystatin kininogen-type 2 domain is found at 151–254; the sequence is TQSPDLEPIL…SQNCDIYPGK (104 aa). A glycan (N-linked (GlcNAc...) asparagine) is linked at N169. An N-linked (GlcNAc...) (complex) asparagine glycan is attached at N205. Positions 273 to 376 constitute a Cystatin kininogen-type 3 domain; sequence TNSPELEETL…TVNCQPLGMI (104 aa). An N-linked (GlcNAc...) (complex) asparagine glycan is attached at N294. At S332 the chain carries Phosphoserine; by FAM20C. P383 carries the 4-hydroxyproline; partial modification. Residues 387–555 form a disordered region; sequence PFRSSRIGEI…TPIPSLAKPG (169 aa). A glycan (O-linked (GalNAc...) threonine) is linked at T401. Residues 418-434 show a composition bias toward basic and acidic residues; sequence DSGKEQGHTRRHDWGHE. 3 repeats span residues 420 to 449, 450 to 479, and 480 to 510; these read GKEQGHTRRHDWGHEKQRKHNLGHGHKHER, DQGHGHQRGHGLGHGHEQQHGLGHGHKFKL, and DDDLEHQGGHVLDHGHKHKHGHGHGKHKNKG. Over residues 435 to 446 the composition is skewed to basic residues; sequence KQRKHNLGHGHK. A compositionally biased stretch (basic and acidic residues) spans 477–493; the sequence is FKLDDDLEHQGGHVLDH. The span at 494-518 shows a compositional bias: basic residues; that stretch reads GHKHKHGHGHGKHKNKGKKNGKHNG. Residues 524–539 show a composition bias toward polar residues; that stretch reads LASSSEDSTTPSAQTQ. T533, T542, T546, T557, and T571 each carry an O-linked (GalNAc...) threonine glycan. O-linked (GalNAc...) serine glycosylation is present at S577. T628 carries O-linked (GalNAc...) threonine glycosylation.

In terms of assembly, interacts (high molecular weight kininogen) (via amino acids 402-532) with triafestin-1 and triafestin-2, anticoagulant proteins from Triatoma infestans. Interacts (high molecular weight kininogen) (via amino acids 402-532) with short form salivary protein D7R1, an anticoagulant protein from Anopheles stephensi. Interacts (high molecular weight kininogen) (via amino acids 421-466 and 459-513) with haemaphysalin, an anticoagulant protein from Haemaphysalis longicornis. In terms of processing, bradykinin is inactivated by ACE, which removes the dipeptide Arg-Phe from its C-terminus. Post-translationally, bradykinin is released from kininogen by plasma kallikrein. Hydroxylation of Pro-383 occurs prior to the release of bradykinin. In terms of processing, phosphorylated by FAM20C in the extracellular medium. Post-translationally, N- and O-glycosylated. O-glycosylated with core 1 or possibly core 8 glycans. (Microbial infection) Bradykinin is generated upon proteolytic cleavage by S.pyogenes SpeB to produce hypotension during septic shock. As to expression, secreted in plasma. T-kinin is detected in malignant ovarian, colon and breast carcinomas, but not in benign tumors.

Its subcellular location is the secreted. The protein resides in the extracellular space. In terms of biological role, kininogens are inhibitors of thiol proteases. HMW-kininogen plays an important role in blood coagulation by helping to position optimally prekallikrein and factor XI next to factor XII; HMW-kininogen inhibits the thrombin- and plasmin-induced aggregation of thrombocytes. LMW-kininogen inhibits the aggregation of thrombocytes. LMW-kininogen is in contrast to HMW-kininogen not involved in blood clotting. Functionally, the active peptide bradykinin is a potent vasodilatator that is released from HMW-kininogen shows a variety of physiological effects: (A) influence in smooth muscle contraction, (B) induction of hypotension, (C) natriuresis and diuresis, (D) decrease in blood glucose level, (E) it is a mediator of inflammation and causes (E1) increase in vascular permeability, (E2) stimulation of nociceptors (4E3) release of other mediators of inflammation (e.g. prostaglandins), (F) it has a cardioprotective effect (directly via bradykinin action, indirectly via endothelium-derived relaxing factor action). This chain is Kininogen-1 (KNG1), found in Homo sapiens (Human).